Here is a 924-residue protein sequence, read N- to C-terminus: Autophagy-related protein 9B (924 aa).

Positions 1–144 are disordered; that stretch reads MVSRMGWGGR…QDSPGLRVGP (144 aa). Topologically, residues 1 to 207 are cytoplasmic; it reads MVSRMGWGGR…KIYSYHQRNG (207 aa). The span at 17 to 27 shows a compositional bias: low complexity; sequence WGDLGPGSVPL. A compositionally biased stretch (pro residues) spans 28–40; it reads LPMPLPPPPPPSC. Residues 78–88 are compositionally biased toward polar residues; that stretch reads LQGTGASQSCH. Low complexity predominate over residues 98–113; sequence PTQAQPAMTPASASPS. A Tyrosine-based sorting signal motif is present at residues 151–154; it reads YERL. Residues 208–228 traverse the membrane as a helical segment; it reads FACILLEDVFQLGQFIFIVTF. The Lumenal segment spans residues 229–276; sequence TTFLLRCVDYNVLFANQPSNHTRPGPFHSKVTLSDAILPSAQCAERIR. A helical transmembrane segment spans residues 277 to 297; the sequence is SSPLLVLLLVLAAGFWLVQLL. The Cytoplasmic segment spans residues 298 to 438; the sequence is RSVCNLFSYW…GALAARWGRT (141 aa). An intramembrane segment occupies 439–459; the sequence is VLLLAALNLALSPLVLAWQVL. Over 460–526 the chain is Cytoplasmic; it reads HVFYSHVELL…AAPPAPLRTL (67 aa). The helical transmembrane segment at 527-547 threads the bilayer; the sequence is LARQLVFFAGALFAALLVLTV. At 548–551 the chain is on the lumenal side; the sequence is YDED. A helical membrane pass occupies residues 552-572; the sequence is VLAVEHVLTAMTALGVTATVA. The Cytoplasmic portion of the chain corresponds to 573 to 624; that stretch reads RSFIPEEQCQGRAPQLLLQTALAHMHYLPEEPGPGGRDRAYRQMAQLLQYRA. The stretch at 625-645 is an intramembrane region; it reads VSLLEELLSPLLTPLFLLFWF. The Cytoplasmic portion of the chain corresponds to 646 to 924; sequence RPRALEIIDF…KEPDRASCTD (279 aa). The disordered stretch occupies residues 847 to 924; that stretch reads QQEPWGEAAA…KEPDRASCTD (78 aa). Over residues 878-890 the composition is skewed to low complexity; that stretch reads SWSSDGSSPASSP. Over residues 913 to 924 the composition is skewed to basic and acidic residues; sequence TQKEPDRASCTD.

Belongs to the ATG9 family. As to quaternary structure, homotrimer; forms a homotrimer with a central pore that forms a path between the two membrane leaflets. As to expression, highly expressed in placenta (trophoblast cells) and pituitary gland. Not expressed in vascular endothelial.

The protein localises to the preautophagosomal structure membrane. It carries out the reaction a 1,2-diacyl-sn-glycero-3-phosphocholine(in) = a 1,2-diacyl-sn-glycero-3-phosphocholine(out). The enzyme catalyses a 1,2-diacyl-sn-glycero-3-phospho-L-serine(in) = a 1,2-diacyl-sn-glycero-3-phospho-L-serine(out). The catalysed reaction is a 1,2-diacyl-sn-glycero-3-phosphoethanolamine(in) = a 1,2-diacyl-sn-glycero-3-phosphoethanolamine(out). Its function is as follows. Phospholipid scramblase involved in autophagy by mediating autophagosomal membrane expansion. Cycles between the preautophagosomal structure/phagophore assembly site (PAS) and the cytoplasmic vesicle pool and supplies membrane for the growing autophagosome. Lipid scramblase activity plays a key role in preautophagosomal structure/phagophore assembly by distributing the phospholipids that arrive through ATG2 (ATG2A or ATG2B) from the cytoplasmic to the luminal leaflet of the bilayer, thereby driving autophagosomal membrane expansion. In addition to autophagy, also plays a role in necrotic cell death. In Homo sapiens (Human), this protein is Autophagy-related protein 9B (ATG9B).